Reading from the N-terminus, the 303-residue chain is uncharacterized protein (303 aa).

One can recognise an HTH araC/xylS-type domain in the interval 183 to 281; it reads KDILFYLNNN…GCSPSDYRRQ (99 aa). DNA-binding regions (H-T-H motif) lie at residues 200-221 and 248-271; these read EQLS…TKEY and QAEI…LRHV.

This is an uncharacterized protein from Escherichia coli (strain K12).